Here is a 494-residue protein sequence, read N- to C-terminus: Alpha-amylase-related protein (494 aa).

The N-terminal stretch at 1–20 (MIKFALALTLCLAGASLSLA) is a signal peptide. Position 21 is a pyrrolidone carboxylic acid (Q21). A disulfide bridge connects residues C48 and C104. Residues N118, Q169, and D178 each contribute to the Ca(2+) site. A disulfide bridge links C157 with C171. R206 provides a ligand contact to chloride. Catalysis depends on D208, which acts as the Nucleophile. H212 is a binding site for Ca(2+). The active-site Proton donor is the E245. Residues N308 and R343 each coordinate chloride. Cystine bridges form between C376–C382, C418–C441, and C448–C460.

Belongs to the glycosyl hydrolase 13 family. As to quaternary structure, monomer. Ca(2+) serves as cofactor. Requires chloride as cofactor.

It is found in the secreted. It carries out the reaction Endohydrolysis of (1-&gt;4)-alpha-D-glucosidic linkages in polysaccharides containing three or more (1-&gt;4)-alpha-linked D-glucose units.. In Drosophila bocqueti (Fruit fly), this protein is Alpha-amylase-related protein (Amyrel).